Consider the following 373-residue polypeptide: UDP-N-acetylenolpyruvoylglucosamine reductase (373 aa).

Residues 30 to 203 enclose the FAD-binding PCMH-type domain; that stretch reads LACTANSVVT…SRVGFRLHTD (174 aa). R180 is a catalytic residue. The active-site Proton donor is the S258. E356 is a catalytic residue.

This sequence belongs to the MurB family. FAD is required as a cofactor.

It localises to the cytoplasm. It carries out the reaction UDP-N-acetyl-alpha-D-muramate + NADP(+) = UDP-N-acetyl-3-O-(1-carboxyvinyl)-alpha-D-glucosamine + NADPH + H(+). Its pathway is cell wall biogenesis; peptidoglycan biosynthesis. Functionally, cell wall formation. The sequence is that of UDP-N-acetylenolpyruvoylglucosamine reductase from Psychrobacter arcticus (strain DSM 17307 / VKM B-2377 / 273-4).